The primary structure comprises 510 residues: Ferredoxin--nitrite reductase (510 aa).

Residues Cys396, Cys402, Cys437, and Cys441 each coordinate [4Fe-4S] cluster. Cys441 is a binding site for siroheme.

Belongs to the nitrite and sulfite reductase 4Fe-4S domain family.

The catalysed reaction is 6 oxidized [2Fe-2S]-[ferredoxin] + NH4(+) + 2 H2O = nitrite + 6 reduced [2Fe-2S]-[ferredoxin] + 8 H(+). The chain is Ferredoxin--nitrite reductase (nirA) from Leptolyngbya laminosa (Phormidium laminosum).